The primary structure comprises 381 residues: Meiotic recombination protein SPO11-1 (381 aa).

In terms of domain architecture, Topo IIA-type catalytic spans 23-162; that stretch reads EEAATLLHRI…LNVVPVAKGL (140 aa). Tyr-123 acts as the O-(5'-phospho-DNA)-tyrosine intermediate in catalysis. Mg(2+) is bound by residues Glu-209 and Asp-261.

Belongs to the TOP6A family. Requires Mg(2+) as cofactor. Highly expressed in flowers before pollination. Expressed in roots and shoots.

It localises to the nucleus. It carries out the reaction ATP-dependent breakage, passage and rejoining of double-stranded DNA.. In terms of biological role, required for meiotic recombination. Mediates DNA cleavage that forms the double-strand breaks (DSB) that initiate meiotic recombination. May be involved in plant growth and development, and stress tolerance. The polypeptide is Meiotic recombination protein SPO11-1 (SPO11-1) (Oryza sativa subsp. indica (Rice)).